The following is a 1128-amino-acid chain: Glutamate receptor-interacting protein 1 (1128 aa).

At S43 the chain carries Phosphoserine. PDZ domains are found at residues 53-136, 150-238, 252-336, 472-561, 573-658, and 673-755; these read VVEL…EYEL, TVEV…EYDV, LVEV…LPHH, EVVL…EFDV, HVKL…RKDE, and TVEL…KKQT. Disordered regions lie at residues 754–798 and 935–981; these read QTDA…YPST and MSLN…GRKS. Residues 944 to 974 are compositionally biased toward polar residues; it reads PRSQLGRQASFQERSSSRPHYSQTTRSNTLP. In terms of domain architecture, PDZ 7 spans 1004 to 1086; it reads KVTLYKDSDM…KLDLVISRNP (83 aa). Over residues 1093–1115 the composition is skewed to polar residues; the sequence is IDQQSLPGDWSEQNSAFFQQPSH. The disordered stretch occupies residues 1093–1128; it reads IDQQSLPGDWSEQNSAFFQQPSHGGNLETREPTNTL.

As to quaternary structure, interacts with EPHA7, EPHB2, KIF5A, KIF5B, KIF5C, GRIA2, GRIA3, GRIPAP1/GRASP1, PPFIA1, PPFIA4, FRAS1, PLCD4, PTPRF and liprins-alpha. Can form homomultimers or heteromultimers with GRIP2. Forms a ternary complex with GRIA2 and CSPG4. Interacts with ATAD1 in an ATP-dependent manner. ATAD1-catalyzed ATP hydrolysis disrupts binding to ATAD1 and to GRIA2 and leads to AMPAR complex disassembly. Interacts with EFNB1, EFNB3 and the C-terminal tail of PRLHR. Interacts with SLC30A9. Interacts with BUD23. Forms a complex with NSG1, GRIA2 and STX12; controls the intracellular fate of AMPAR and the endosomal sorting of the GRIA2 subunit toward recycling and membrane targeting. Interacts with NSG1.

Its subcellular location is the cytoplasmic vesicle. The protein localises to the perikaryon. It is found in the cell projection. The protein resides in the dendrite. It localises to the cytoplasm. Its subcellular location is the endomembrane system. The protein localises to the postsynaptic cell membrane. It is found in the postsynaptic density. The protein resides in the endoplasmic reticulum membrane. May play a role as a localized scaffold for the assembly of a multiprotein signaling complex and as mediator of the trafficking of its binding partners at specific subcellular location in neurons. Through complex formation with NSG1, GRIA2 and STX12 controls the intracellular fate of AMPAR and the endosomal sorting of the GRIA2 subunit toward recycling and membrane targeting. The chain is Glutamate receptor-interacting protein 1 (GRIP1) from Homo sapiens (Human).